Consider the following 140-residue polypeptide: Large ribosomal subunit protein uL16 (140 aa).

Positions 1 to 14 (MLSPRRTKFRKQQR) are enriched in basic residues. The tract at residues 1–22 (MLSPRRTKFRKQQRGRMEGAAT) is disordered.

The protein belongs to the universal ribosomal protein uL16 family. In terms of assembly, part of the 50S ribosomal subunit.

Functionally, binds 23S rRNA and is also seen to make contacts with the A and possibly P site tRNAs. The sequence is that of Large ribosomal subunit protein uL16 from Cyanothece sp. (strain PCC 7425 / ATCC 29141).